The following is a 615-amino-acid chain: Deoxyribodipyrimidine photo-lyase (615 aa).

The tract at residues 1 to 53 (MAPSKRKASAPPQTSHVNGNPSADKKRKTTTDAPPTNPNTSSDPLRAPHPFYK) is disordered. Residues 11–21 (PPQTSHVNGNP) show a composition bias toward polar residues. Residues 31 to 40 (TDAPPTNPNT) show a composition bias toward low complexity. The 142-residue stretch at 108–249 (QAVVHWFKMD…AADVVHDTCV (142 aa)) folds into the Photolyase/cryptochrome alpha/beta domain. Tyrosine 352 provides a ligand contact to FAD. A DNA-binding site is contributed by arginine 356. 364-368 (TSNLS) contributes to the FAD binding site. Interaction with DNA regions lie at residues 407-414 (EVAWRDFY) and 474-475 (NR). Residue 505 to 507 (DGD) coordinates FAD. A DNA-binding site is contributed by glutamine 537.

It belongs to the DNA photolyase class-1 family. In terms of assembly, monomer. Requires FAD as cofactor. The cofactor is (6R)-5,10-methylene-5,6,7,8-tetrahydrofolate.

The catalysed reaction is cyclobutadipyrimidine (in DNA) = 2 pyrimidine residues (in DNA).. Functionally, involved in repair of UV radiation-induced DNA damage. Catalyzes the light-dependent monomerization (300-600 nm) of cyclobutyl pyrimidine dimers (in cis-syn configuration), which are formed between adjacent bases on the same DNA strand upon exposure to ultraviolet radiation. This chain is Deoxyribodipyrimidine photo-lyase (phr), found in Neurospora crassa (strain ATCC 24698 / 74-OR23-1A / CBS 708.71 / DSM 1257 / FGSC 987).